Consider the following 284-residue polypeptide: Tropomyosin alpha-3 chain (284 aa).

The residue at position 1 (Met1) is an N-acetylmethionine. Positions 1-40 (MEAIKKKMQMLKLDKENALDRAEQAEAEQKQAEERSKQLE) are disordered. Positions 1 to 284 (MEAIKKKMQM…DHALNDMTSI (284 aa)) form a coiled coil. A compositionally biased stretch (basic and acidic residues) spans 12–40 (KLDKENALDRAEQAEAEQKQAEERSKQLE). The residue at position 53 (Thr53) is a Phosphothreonine. 2 positions are modified to phosphoserine: Ser61 and Ser87. 2 positions are modified to phosphothreonine: Thr108 and Thr252. The residue at position 261 (Tyr261) is a Phosphotyrosine. Residue Ser271 is modified to Phosphoserine. A Phosphothreonine modification is found at Thr282. Ser283 carries the post-translational modification Phosphoserine.

Belongs to the tropomyosin family. As to quaternary structure, homodimer. Heterodimer of an alpha (TPM1, TPM3 or TPM4) and a beta (TPM2) chain. Interacts with TMOD1. Interacts with TNNT1.

It localises to the cytoplasm. The protein resides in the cytoskeleton. In terms of biological role, binds to actin filaments in muscle and non-muscle cells. Plays a central role, in association with the troponin complex, in the calcium dependent regulation of vertebrate striated muscle contraction. Smooth muscle contraction is regulated by interaction with caldesmon. In non-muscle cells is implicated in stabilizing cytoskeleton actin filaments. The protein is Tropomyosin alpha-3 chain (TPM3) of Sus scrofa (Pig).